A 450-amino-acid chain; its full sequence is Proline--tRNA ligase (450 aa).

It belongs to the class-II aminoacyl-tRNA synthetase family. ProS type 2 subfamily. In terms of assembly, homodimer.

It is found in the cytoplasm. It carries out the reaction tRNA(Pro) + L-proline + ATP = L-prolyl-tRNA(Pro) + AMP + diphosphate. Catalyzes the attachment of proline to tRNA(Pro) in a two-step reaction: proline is first activated by ATP to form Pro-AMP and then transferred to the acceptor end of tRNA(Pro). The sequence is that of Proline--tRNA ligase from Paracoccus denitrificans (strain Pd 1222).